A 398-amino-acid chain; its full sequence is Phosphoglycerate kinase (398 aa).

Residues 21-23 (DFN), R36, 59-62 (HLGR), R119, and R157 each bind substrate. ATP is bound by residues K208, G296, E327, and 354-357 (GGDS).

This sequence belongs to the phosphoglycerate kinase family. Monomer.

It localises to the cytoplasm. The catalysed reaction is (2R)-3-phosphoglycerate + ATP = (2R)-3-phospho-glyceroyl phosphate + ADP. It participates in carbohydrate degradation; glycolysis; pyruvate from D-glyceraldehyde 3-phosphate: step 2/5. The protein is Phosphoglycerate kinase of Lactococcus lactis subsp. cremoris (strain SK11).